A 325-amino-acid chain; its full sequence is Melanocortin receptor 5 (325 aa).

At 1–37 (MNSSFHLHFLDLGLNTTDGNLSGLSVQNASSLCEDMG) the chain is on the extracellular side. N-linked (GlcNAc...) asparagine glycosylation is found at Asn-2, Asn-15, Asn-20, and Asn-28. The helical transmembrane segment at 38–61 (IAVEVFLALGLISLLENILVIGAI) threads the bilayer. The Cytoplasmic portion of the chain corresponds to 62–73 (VRNRNLHTPMYF). A helical transmembrane segment spans residues 74 to 97 (FVGSLAVADMLVSLSNSWETITIY). The Extracellular portion of the chain corresponds to 98–114 (LLTNKHLVMADASVRHL). A helical membrane pass occupies residues 115-138 (DNVFDSMICISVVASMCSLLAIAV). Over 139 to 155 (DRYVTIFCALRYQRIMT) the chain is Cytoplasmic. A helical membrane pass occupies residues 156-179 (GRRSGAIIGGIWAFCASCGTVFIV). The Extracellular segment spans residues 180–186 (YYESTYV). A helical transmembrane segment spans residues 187–211 (VICLIAMFLTMLLLMASLYTHMFLL). Over 212–239 (ARTHIRRIATLPGHSSVRQRTGVKGAIT) the chain is Cytoplasmic. Residues 240 to 265 (LAMLLGVFIVCWAPFFLHLILMISCP) form a helical membrane-spanning segment. Residues 266–273 (HNLYCSCF) lie on the Extracellular side of the membrane. Residues 274-297 (MSHFNMYLILIMCNSVIDPLIYAF) form a helical membrane-spanning segment. Topologically, residues 298–325 (RSQEMRKTFKEIVCFQSFRTPCRFPSRY) are cytoplasmic. Cys-311 is lipidated: S-palmitoyl cysteine.

Belongs to the G-protein coupled receptor 1 family.

The protein localises to the cell membrane. Functionally, receptor for MSH (alpha, beta and gamma) and ACTH. The activity of this receptor is mediated by G proteins which activate adenylate cyclase. This receptor is a possible mediator of the immunomodulation properties of melanocortins. The protein is Melanocortin receptor 5 (MC5R) of Bos taurus (Bovine).